The sequence spans 604 residues: Aspartate--tRNA(Asp/Asn) ligase (604 aa).

Glu-175 contributes to the L-aspartate binding site. An aspartate region spans residues Gln-199 to Lys-202. L-aspartate-binding residues include Arg-221 and His-456. Arg-221 to Glu-223 is an ATP binding site. Residue Glu-496 participates in ATP binding. Arg-503 is a binding site for L-aspartate. Gly-548–Arg-551 contributes to the ATP binding site.

The protein belongs to the class-II aminoacyl-tRNA synthetase family. Type 1 subfamily. As to quaternary structure, homodimer.

It localises to the cytoplasm. It carries out the reaction tRNA(Asx) + L-aspartate + ATP = L-aspartyl-tRNA(Asx) + AMP + diphosphate. In terms of biological role, aspartyl-tRNA synthetase with relaxed tRNA specificity since it is able to aspartylate not only its cognate tRNA(Asp) but also tRNA(Asn). Reaction proceeds in two steps: L-aspartate is first activated by ATP to form Asp-AMP and then transferred to the acceptor end of tRNA(Asp/Asn). The protein is Aspartate--tRNA(Asp/Asn) ligase of Methylorubrum extorquens (strain CM4 / NCIMB 13688) (Methylobacterium extorquens).